The sequence spans 363 residues: Protein-glutamate methylesterase/protein-glutamine glutaminase of group 3 operon (363 aa).

The Response regulatory domain occupies 7–124 (RVLIVDDSAS…RQALMESSGR (118 aa)). Asp-58 is subject to 4-aspartylphosphate. The region spanning 166-357 (PTTERIVCIG…REIMAWQQAK (192 aa)) is the CheB-type methylesterase domain. Residues Ser-177, His-203, and Asp-299 contribute to the active site.

Belongs to the CheB family. In terms of processing, phosphorylated by CheA. Phosphorylation of the N-terminal regulatory domain activates the methylesterase activity.

It localises to the cytoplasm. It catalyses the reaction [protein]-L-glutamate 5-O-methyl ester + H2O = L-glutamyl-[protein] + methanol + H(+). The catalysed reaction is L-glutaminyl-[protein] + H2O = L-glutamyl-[protein] + NH4(+). In terms of biological role, involved in chemotaxis. Part of a chemotaxis signal transduction system that modulates chemotaxis in response to various stimuli. Catalyzes the demethylation of specific methylglutamate residues introduced into the chemoreceptors (methyl-accepting chemotaxis proteins or MCP) by CheR. Also mediates the irreversible deamidation of specific glutamine residues to glutamic acid. The protein is Protein-glutamate methylesterase/protein-glutamine glutaminase of group 3 operon of Rhodopseudomonas palustris (strain ATCC BAA-98 / CGA009).